Here is a 661-residue protein sequence, read N- to C-terminus: Sperm transmembrane protein 9 (661 aa).

The N-terminal stretch at 1–16 is a signal peptide; that stretch reads MNVILVLVVLFFAGDC. Over 17–618 the chain is Extracellular; that stretch reads AKIRKIIDFL…MTNRLMKNYE (602 aa). The region spanning 52–90 is the EGF-like 1 domain; sequence NFNPCLENPKICSNRGKCLHENGNFYCICPVTHYGKTCE. Cystine bridges form between C56–C69, C63–C78, and C80–C89. 4 N-linked (GlcNAc...) asparagine glycosylation sites follow: N105, N106, N134, and N190. The EGF-like 2 domain maps to 210 to 259; that stretch reads QISACFDTQCDNGGICEDVVDWKTKTVTATCKCPSAIELIGGTVTGENCE. Intrachain disulfides connect C214–C225, C219–C240, and C242–C258. 4 N-linked (GlcNAc...) asparagine glycosylation sites follow: N279, N290, N316, and N338. The Cell attachment site signature appears at 377–379; sequence RGD. EGF-like domains are found at residues 377-414, 519-557, and 559-600; these read RGDRWDEKCTDSQHGACVDISGVAHCVCKPDYTGEKCE, HTNPCYQNLCQNSATCHIDPKQRSYDCQCVNGTRGSLCE, and VDDS…LDCN. 9 cysteine pairs are disulfide-bonded: C385–C402, C393–C404, C413–C419, C523–C534, C528–C545, C547–C556, C563–C576, C571–C588, and C590–C599. N549 carries an N-linked (GlcNAc...) asparagine glycan. A helical transmembrane segment spans residues 619–639; the sequence is FSLPLVACFVSLAILLPVIVI. Residues 640–661 are Cytoplasmic-facing; the sequence is SRRRQGRVEEAKKTSEVKTENP.

Expressed in spermatids, during spermogenesis expression is primarily localized to the pseudopod.

The protein resides in the cytoplasm. It localises to the membrane. Functionally, required for fertilization. May be required for cell adhesion and/or function as a signaling molecule. The sequence is that of Sperm transmembrane protein 9 (spe-9) from Caenorhabditis elegans.